A 264-amino-acid polypeptide reads, in one-letter code: Thiazole synthase (264 aa).

Lys-106 (schiff-base intermediate with DXP) is an active-site residue. Residues Gly-167, 193–194 (AG), and 215–216 (NS) each bind 1-deoxy-D-xylulose 5-phosphate.

It belongs to the ThiG family. As to quaternary structure, homotetramer. Forms heterodimers with either ThiH or ThiS.

Its subcellular location is the cytoplasm. It carries out the reaction [ThiS sulfur-carrier protein]-C-terminal-Gly-aminoethanethioate + 2-iminoacetate + 1-deoxy-D-xylulose 5-phosphate = [ThiS sulfur-carrier protein]-C-terminal Gly-Gly + 2-[(2R,5Z)-2-carboxy-4-methylthiazol-5(2H)-ylidene]ethyl phosphate + 2 H2O + H(+). Its pathway is cofactor biosynthesis; thiamine diphosphate biosynthesis. Catalyzes the rearrangement of 1-deoxy-D-xylulose 5-phosphate (DXP) to produce the thiazole phosphate moiety of thiamine. Sulfur is provided by the thiocarboxylate moiety of the carrier protein ThiS. In vitro, sulfur can be provided by H(2)S. The sequence is that of Thiazole synthase from Pseudomonas savastanoi pv. phaseolicola (strain 1448A / Race 6) (Pseudomonas syringae pv. phaseolicola (strain 1448A / Race 6)).